A 254-amino-acid polypeptide reads, in one-letter code: Polysaccharide deacetylase domain-containing protein ECU11_0510 (254 aa).

The 185-residue stretch at 26 to 210 (GMIAINFVDG…IGKDKGYRFV (185 aa)) folds into the NodB homology domain.

The protein is Polysaccharide deacetylase domain-containing protein ECU11_0510 of Encephalitozoon cuniculi (strain GB-M1) (Microsporidian parasite).